We begin with the raw amino-acid sequence, 299 residues long: tRNA pseudouridine synthase B (299 aa).

The active-site Nucleophile is Asp-49. In terms of domain architecture, PUA spans 241-299; the sequence is MPRVTVSGRAAARVLHGVAPAVRVEHPDGTTVAVVAANGALLALAEADGGGLRLRKVFG.

Belongs to the pseudouridine synthase TruB family. Type 1 subfamily.

The enzyme catalyses uridine(55) in tRNA = pseudouridine(55) in tRNA. Its function is as follows. Responsible for synthesis of pseudouridine from uracil-55 in the psi GC loop of transfer RNAs. This Symbiobacterium thermophilum (strain DSM 24528 / JCM 14929 / IAM 14863 / T) protein is tRNA pseudouridine synthase B.